We begin with the raw amino-acid sequence, 123 residues long: Phosphoribosyl-AMP cyclohydrolase (123 aa).

Asp-81 is a Mg(2+) binding site. A Zn(2+)-binding site is contributed by Cys-82. Mg(2+) is bound by residues Asp-83 and Asp-85. Positions 98 and 105 each coordinate Zn(2+).

Belongs to the PRA-CH family. In terms of assembly, homodimer. Requires Mg(2+) as cofactor. The cofactor is Zn(2+).

It is found in the cytoplasm. The enzyme catalyses 1-(5-phospho-beta-D-ribosyl)-5'-AMP + H2O = 1-(5-phospho-beta-D-ribosyl)-5-[(5-phospho-beta-D-ribosylamino)methylideneamino]imidazole-4-carboxamide. It functions in the pathway amino-acid biosynthesis; L-histidine biosynthesis; L-histidine from 5-phospho-alpha-D-ribose 1-diphosphate: step 3/9. Functionally, catalyzes the hydrolysis of the adenine ring of phosphoribosyl-AMP. This Nocardioides sp. (strain ATCC BAA-499 / JS614) protein is Phosphoribosyl-AMP cyclohydrolase.